We begin with the raw amino-acid sequence, 160 residues long: PPLVEKYWRMRTTHTVEFYRRMRRATLPRALARACAPGPLVHPSLYIGFPCGIPGACALESPSHNPRGNALTTKNSPRLRMRTETPSHWKSWLPKFGKNLPPPVPEEKGGGEGGGLRWFPFRQSVFVERFVRRIMLYRVCILGVEARLRPYGASPSIRYT.

This is an uncharacterized protein from Human cytomegalovirus (strain AD169) (HHV-5).